The primary structure comprises 931 residues: Mitochondrial cox1 translation regulator ppr4 (931 aa).

The N-terminal 16 residues, 1–16, are a transit peptide targeting the mitochondrion; the sequence is MSKSFAYRHIWCFWRF. PPR repeat units lie at residues 247 to 277, 282 to 316, 429 to 461, 462 to 496, 497 to 531, 598 to 632, and 683 to 713; these read NEVL…MYRT, SFTA…RPKI, HLLN…KIKV, DERT…GIKT, SNQA…GITE, NVVH…GKAP, and PPSL…YLEY.

As to quaternary structure, component of the MRH5C complex, composed of mrh5, ppr4, mtf2, and sls1. Proteins mtf2 and sls1 form a subcomplex that serves as a scaffold to bring mrh5 and ppr4 together. The MRH5C complex associates with the small subunit of the mitochondrial ribosome.

The protein localises to the mitochondrion. Functionally, RNA-binding translation activation factor that as part of the MRH5C complex specifically recruits cox1 mRNA to the mitochondrial ribosome for translation initiation. This is Mitochondrial cox1 translation regulator ppr4 from Schizosaccharomyces pombe (strain 972 / ATCC 24843) (Fission yeast).